An 89-amino-acid chain; its full sequence is Small ribosomal subunit protein uS15 (89 aa).

Belongs to the universal ribosomal protein uS15 family. As to quaternary structure, part of the 30S ribosomal subunit. Forms a bridge to the 50S subunit in the 70S ribosome, contacting the 23S rRNA.

In terms of biological role, one of the primary rRNA binding proteins, it binds directly to 16S rRNA where it helps nucleate assembly of the platform of the 30S subunit by binding and bridging several RNA helices of the 16S rRNA. Functionally, forms an intersubunit bridge (bridge B4) with the 23S rRNA of the 50S subunit in the ribosome. The sequence is that of Small ribosomal subunit protein uS15 from Shewanella halifaxensis (strain HAW-EB4).